The chain runs to 150 residues: MGQYKIWVDADACPNPIKEILFRAAERKSLPLVLVANQMLRVPPSPYISQVRVGSGFDVADQYIVDHVEATHLVITADIPLAAQVIEKGALALNPRGELYTTDNIRQKLTMRDFMEDLRSSGVHTGGPDALSAADKQAFANSLDKWLVRV.

It belongs to the UPF0178 family.

This chain is UPF0178 protein Shewmr4_1560, found in Shewanella sp. (strain MR-4).